The primary structure comprises 449 residues: Tubulin alpha-1B chain (449 aa).

Glutamine 11 serves as a coordination point for GTP. Lysine 40 carries the N6-acetyllysine modification. The GTP site is built by glutamate 71, serine 140, glycine 144, threonine 145, threonine 179, asparagine 206, and asparagine 228. Glutamate 71 is a binding site for Mg(2+). Glutamate 254 is an active-site residue.

The protein belongs to the tubulin family. As to quaternary structure, dimer of alpha and beta chains. A typical microtubule is a hollow water-filled tube with an outer diameter of 25 nm and an inner diameter of 15 nM. Alpha-beta heterodimers associate head-to-tail to form protofilaments running lengthwise along the microtubule wall with the beta-tubulin subunit facing the microtubule plus end conferring a structural polarity. Microtubules usually have 13 protofilaments but different protofilament numbers can be found in some organisms and specialized cells. The cofactor is Mg(2+). Post-translationally, acetylation of alpha chains at Lys-40 stabilizes microtubules and affects affinity and processivity of microtubule motors. This modification has a role in multiple cellular functions, ranging from cell motility, cell cycle progression or cell differentiation to intracellular trafficking and signaling.

The protein resides in the cytoplasm. It localises to the cytoskeleton. Its subcellular location is the spindle. It is found in the nucleus. The enzyme catalyses GTP + H2O = GDP + phosphate + H(+). Functionally, tubulin is the major constituent of microtubules, a cylinder consisting of laterally associated linear protofilaments composed of alpha- and beta-tubulin heterodimers. Microtubules grow by the addition of GTP-tubulin dimers to the microtubule end, where a stabilizing cap forms. Below the cap, tubulin dimers are in GDP-bound state, owing to GTPase activity of alpha-tubulin. This Physarum polycephalum (Slime mold) protein is Tubulin alpha-1B chain (ALTBN).